The primary structure comprises 547 residues: Serine/threonine-protein kinase RIO2 (547 aa).

The 177-residue stretch at 97 to 273 folds into the Protein kinase domain; it reads VGNQMGVGKE…RDVKCIREFF (177 aa). K123 provides a ligand contact to ATP. The active-site Proton acceptor is the D228. S332, S337, S350, S362, S385, and S390 each carry phosphoserine. The disordered stretch occupies residues 352–385; that stretch reads LEKEADPADESGGSWCCSSTDSKQIKDGGLPEES. The short motif at 399 to 408 is the Nuclear export signal element; it reads AVEEMERQVL. Residues 404–445 form a disordered region; that stretch reads ERQVLPHRSVTEFSEESRRTENDGQPGQRSPAGSEDCDDEPP. Phosphoserine occurs at positions 412, 417, 433, 437, and 543.

This sequence belongs to the protein kinase superfamily. RIO-type Ser/Thr kinase family. As to quaternary structure, associated with late 40S pre-ribosomal particles. Interacts with PLK1 (via its N-terminus). The cofactor is Mg(2+). Post-translationally, autophosphorylated (in vitro). Phosphorylation affects the timing of the metaphase-anaphase transition.

Its subcellular location is the cytoplasm. The enzyme catalyses L-seryl-[protein] + ATP = O-phospho-L-seryl-[protein] + ADP + H(+). It catalyses the reaction L-threonyl-[protein] + ATP = O-phospho-L-threonyl-[protein] + ADP + H(+). Functionally, serine/threonine-protein kinase involved in the final steps of cytoplasmic maturation of the 40S ribosomal subunit. Involved in export of the 40S pre-ribosome particles (pre-40S) from the nucleus to the cytoplasm. Its kinase activity is required for the release of NOB1, PNO1 and LTV1 from the late pre-40S and the processing of 18S-E pre-rRNA to the mature 18S rRNA. May regulate the timing of the metaphase-anaphase transition during mitotic progression, and its phosphorylation, may regulate this function. This Mus musculus (Mouse) protein is Serine/threonine-protein kinase RIO2 (Riok2).